The following is a 310-amino-acid chain: D-apiose import binding protein (310 aa).

Residues 1–21 (MKLLKASLVALSLAASTFVYA) form the signal peptide. Residues Asn-35, 111-112 (DR), 158-160 (DTN), Arg-164, Asn-214, Asp-239, and Gln-260 contribute to the D-apiofuranose site.

Belongs to the bacterial solute-binding protein 2 family.

It is found in the periplasm. Functionally, part of an ABC transporter complex involved in D-apiose import. Binds D-apiose, D-ribose and D-ribulose. The sequence is that of D-apiose import binding protein from Actinobacillus succinogenes (strain ATCC 55618 / DSM 22257 / CCUG 43843 / 130Z).